A 569-amino-acid polypeptide reads, in one-letter code: Dihydroorotate dehydrogenase (quinone), mitochondrial (569 aa).

Residues 1–23 (MISKLKPQFMFLPKKHILSYCRK) constitute a mitochondrion transit peptide. The chain crosses the membrane as a helical span at residues 143–163 (IIFLLFVSLFGLYGFFESYNP). FMN contacts are provided by residues 225 to 229 (AGFDK) and Thr249. Lys229 contributes to the substrate binding site. Residues 274–278 (NSCGF) and Asn342 contribute to the substrate site. Asn342 lines the FMN pocket. Ser345 serves as the catalytic Nucleophile. Asn347 contacts substrate. Lys429 contacts FMN. Residue 458–459 (NT) participates in substrate binding. Residues 477–478 (SG), 505–507 (SGG), and 528–529 (YS) each bind FMN.

It belongs to the dihydroorotate dehydrogenase family. Type 2 subfamily. In terms of assembly, monomer. FMN is required as a cofactor.

It localises to the mitochondrion inner membrane. It catalyses the reaction (S)-dihydroorotate + a quinone = orotate + a quinol. It functions in the pathway pyrimidine metabolism; UMP biosynthesis via de novo pathway; orotate from (S)-dihydroorotate (quinone route): step 1/1. Its function is as follows. Catalyzes the conversion of dihydroorotate to orotate with quinone as electron acceptor. This chain is Dihydroorotate dehydrogenase (quinone), mitochondrial, found in Plasmodium falciparum (isolate 3D7).